Here is a 157-residue protein sequence, read N- to C-terminus: SsrA-binding protein (157 aa).

The protein belongs to the SmpB family.

Its subcellular location is the cytoplasm. Functionally, required for rescue of stalled ribosomes mediated by trans-translation. Binds to transfer-messenger RNA (tmRNA), required for stable association of tmRNA with ribosomes. tmRNA and SmpB together mimic tRNA shape, replacing the anticodon stem-loop with SmpB. tmRNA is encoded by the ssrA gene; the 2 termini fold to resemble tRNA(Ala) and it encodes a 'tag peptide', a short internal open reading frame. During trans-translation Ala-aminoacylated tmRNA acts like a tRNA, entering the A-site of stalled ribosomes, displacing the stalled mRNA. The ribosome then switches to translate the ORF on the tmRNA; the nascent peptide is terminated with the 'tag peptide' encoded by the tmRNA and targeted for degradation. The ribosome is freed to recommence translation, which seems to be the essential function of trans-translation. This is SsrA-binding protein from Lacticaseibacillus paracasei (strain ATCC 334 / BCRC 17002 / CCUG 31169 / CIP 107868 / KCTC 3260 / NRRL B-441) (Lactobacillus paracasei).